Consider the following 333-residue polypeptide: Glutamyl-tRNA reductase (333 aa).

Substrate contacts are provided by residues 60-63, Ser110, 115-117, and Gln121; these read TCHR and ETE. Cys61 functions as the Nucleophile in the catalytic mechanism. 189-194 is a binding site for NADP(+); sequence GYSEIN.

The protein belongs to the glutamyl-tRNA reductase family. Homodimer.

The enzyme catalyses (S)-4-amino-5-oxopentanoate + tRNA(Glu) + NADP(+) = L-glutamyl-tRNA(Glu) + NADPH + H(+). It participates in porphyrin-containing compound metabolism; protoporphyrin-IX biosynthesis; 5-aminolevulinate from L-glutamyl-tRNA(Glu): step 1/2. In terms of biological role, catalyzes the NADPH-dependent reduction of glutamyl-tRNA(Glu) to glutamate 1-semialdehyde (GSA). In Chlamydia muridarum (strain MoPn / Nigg), this protein is Glutamyl-tRNA reductase.